The primary structure comprises 577 residues: E3 ubiquitin-protein ligase MSL2 (577 aa).

The sufficient for interaction with MSL1 stretch occupies residues 1-116; sequence MNPVNATALY…CEYITQTTLA (116 aa). 8 residues coordinate Zn(2+): Cys-44, Cys-47, Cys-62, His-64, Cys-67, Cys-70, Cys-81, and Cys-84. The RING-type zinc-finger motif lies at 44–85; it reads CCVCGHLLQDPIAPTNSTCQHYVCKTCKGKKMMMKPSCSWCK. Residue Lys-375 forms a Glycyl lysine isopeptide (Lys-Gly) (interchain with G-Cter in SUMO2) linkage. The segment at 405-427 is disordered; sequence TKSMKKSHEHGSKKSHSKTKPGI. A compositionally biased stretch (basic residues) spans 407–423; sequence SMKKSHEHGSKKSHSKT. Ser-447 carries the phosphoserine modification. A CXC MSL2-type domain is found at 457 to 508; it reads QEKKGCKCGRATQNPSVLTCRGQRCPCYSNRKACLDCICRGCQNSYMANGEK. The Zn(2+) site is built by Cys-462, Cys-464, Cys-476, Cys-481, Cys-483, Cys-490, Cys-493, Cys-495, and Cys-498.

It belongs to the MSL2 family. As to quaternary structure, component of a multisubunit histone acetyltransferase complex (MSL) at least composed of the KAT8/MOF/MYST1, MSL1/hampin, MSL2 and MSL3. Forms a MSL heterotetrameric core with MSL1.

The protein localises to the nucleus. The protein resides in the chromosome. The enzyme catalyses S-ubiquitinyl-[E2 ubiquitin-conjugating enzyme]-L-cysteine + [acceptor protein]-L-lysine = [E2 ubiquitin-conjugating enzyme]-L-cysteine + N(6)-ubiquitinyl-[acceptor protein]-L-lysine.. The protein operates within protein modification; protein ubiquitination. Functionally, non-catalytic component of the MSL histone acetyltransferase complex, a multiprotein complex that mediates the majority of histone H4 acetylation at 'Lys-16' (H4K16ac), an epigenetic mark that prevents chromatin compaction. The MSL complex is required for chromosome stability and genome integrity by maintaining homeostatic levels of H4K16ac. The MSL complex is also involved in gene dosage by promoting up-regulation of genes expressed by the X chromosome. X up-regulation is required to compensate for autosomal biallelic expression. The MSL complex also participates in gene dosage compensation by promoting expression of Tsix non-coding RNA. MSL2 plays a key role in gene dosage by ensuring biallelic expression of a subset of dosage-sensitive genes, including many haploinsufficient genes. Acts by promoting promoter-enhancer contacts, thereby preventing DNA methylation of one allele and creating a methylation-free environment for methylation-sensitive transcription factors such as SP1, KANSL1 and KANSL3. Also acts as an E3 ubiquitin ligase that promotes monoubiquitination of histone H2B at 'Lys-35' (H2BK34Ub), but not that of H2A. This activity is greatly enhanced by heterodimerization with MSL1. H2B ubiquitination in turn stimulates histone H3 methylation at 'Lys-4' (H3K4me) and 'Lys-79' (H3K79me) and leads to gene activation, including that of HOXA9 and MEIS1. Also involved in the DNA damage response by mediating ubiquitination of TP53/p53 and TP53BP1. This chain is E3 ubiquitin-protein ligase MSL2, found in Homo sapiens (Human).